The following is a 380-amino-acid chain: O-phospho-L-seryl-tRNA:Cys-tRNA synthase (380 aa).

Pyridoxal 5'-phosphate-binding positions include 86–87 (AR), Asn-192, and 215–217 (SGH). Lys-218 carries the N6-(pyridoxal phosphate)lysine modification.

This sequence belongs to the SepCysS family. Homodimer. Interacts with SepRS. The cofactor is pyridoxal 5'-phosphate.

It catalyses the reaction O-phospho-L-seryl-tRNA(Cys) + hydrogen sulfide + H(+) = L-cysteinyl-tRNA(Cys) + phosphate. Converts O-phospho-L-seryl-tRNA(Cys) (Sep-tRNA(Cys)) to L-cysteinyl-tRNA(Cys) (Cys-tRNA(Cys)). The protein is O-phospho-L-seryl-tRNA:Cys-tRNA synthase of Methanococcus maripaludis (strain DSM 14266 / JCM 13030 / NBRC 101832 / S2 / LL).